A 187-amino-acid polypeptide reads, in one-letter code: MSINEYAKELKAALAQYPNFPKEGVLFEDFLPIFRSPQLFQKLIDAFKMHLAEAFPETKIDYLVGLESRGFLFGPSLALAIGAGFVPVRKAGKLPGQVVKTTYVKEYEEDVFEMQVDSIPVGATVVVVDDILATGGSAGAAGDLIKQLGATILEFIFVMELDFLKGREKLQAPVFTLLQGQEEALGN.

133–137 (ATGGS) is a binding site for AMP.

Belongs to the purine/pyrimidine phosphoribosyltransferase family. In terms of assembly, homodimer. Requires Mg(2+) as cofactor.

Its subcellular location is the cytoplasm. The protein localises to the nucleus. It carries out the reaction AMP + diphosphate = 5-phospho-alpha-D-ribose 1-diphosphate + adenine. It participates in purine metabolism; AMP biosynthesis via salvage pathway; AMP from adenine: step 1/1. Catalyzes a salvage reaction resulting in the formation of AMP, that is energically less costly than de novo synthesis. The sequence is that of Adenine phosphoribosyltransferase (APT1) from Eremothecium gossypii (strain ATCC 10895 / CBS 109.51 / FGSC 9923 / NRRL Y-1056) (Yeast).